The primary structure comprises 610 residues: DNA mismatch repair protein MutL (610 aa).

This sequence belongs to the DNA mismatch repair MutL/HexB family.

Functionally, this protein is involved in the repair of mismatches in DNA. It is required for dam-dependent methyl-directed DNA mismatch repair. May act as a 'molecular matchmaker', a protein that promotes the formation of a stable complex between two or more DNA-binding proteins in an ATP-dependent manner without itself being part of a final effector complex. The sequence is that of DNA mismatch repair protein MutL from Rickettsia conorii (strain ATCC VR-613 / Malish 7).